The primary structure comprises 176 residues: Shikimate kinase (176 aa).

10–15 provides a ligand contact to ATP; that stretch reads TSGKSS. S14 contributes to the Mg(2+) binding site. Substrate-binding residues include D32, G81, and R138.

Belongs to the shikimate kinase family. As to quaternary structure, monomer. Mg(2+) is required as a cofactor.

It localises to the cytoplasm. The catalysed reaction is shikimate + ATP = 3-phosphoshikimate + ADP + H(+). The protein operates within metabolic intermediate biosynthesis; chorismate biosynthesis; chorismate from D-erythrose 4-phosphate and phosphoenolpyruvate: step 5/7. Catalyzes the specific phosphorylation of the 3-hydroxyl group of shikimic acid using ATP as a cosubstrate. In Chlamydia pneumoniae (Chlamydophila pneumoniae), this protein is Shikimate kinase.